Consider the following 320-residue polypeptide: Cytochrome f (320 aa).

The N-terminal stretch at 1–35 (MQTRNTFSWIREEITRSISVSLMIYIITWASISSA) is a signal peptide. The heme site is built by Tyr-36, Cys-56, Cys-59, and His-60. The helical transmembrane segment at 286-306 (VQGLLFFLGSVVLAQIFLVLK) threads the bilayer.

Belongs to the cytochrome f family. As to quaternary structure, the 4 large subunits of the cytochrome b6-f complex are cytochrome b6, subunit IV (17 kDa polypeptide, petD), cytochrome f and the Rieske protein, while the 4 small subunits are PetG, PetL, PetM and PetN. The complex functions as a dimer. Heme is required as a cofactor.

The protein resides in the plastid. It is found in the chloroplast thylakoid membrane. Component of the cytochrome b6-f complex, which mediates electron transfer between photosystem II (PSII) and photosystem I (PSI), cyclic electron flow around PSI, and state transitions. This Crucihimalaya wallichii (Rock-cress) protein is Cytochrome f.